The sequence spans 378 residues: Nucleosome assembly protein 1;1 (378 aa).

The stretch at 33–87 (VNALKDKLQSLAGQHTDVLEALSPNVRKRVEYLREIQGQHDEIELKFFEERAALE) forms a coiled coil. The Nuclear export signal signature appears at 54-69 (LSPNVRKRVEYLREIQ). The Nuclear localization signal motif lies at 230-235 (KKKPKK). The segment at 306 to 378 (AVQAEDFDDM…ADQPADCKQQ (73 aa)) is disordered. Residues 308–344 (QAEDFDDMEDDEEDDEDDDEDEEEEEEDEDEDEDDEE) show a composition bias toward acidic residues. The Nuclear localization signal motif lies at 348–352 (KPKKK). Low complexity predominate over residues 356-378 (KPKLPSKGGAQGGADQPADCKQQ). C375 carries the cysteine methyl ester modification. C375 carries the S-farnesyl cysteine lipid modification. Residues 376 to 378 (KQQ) constitute a propeptide, removed in mature form.

The protein belongs to the nucleosome assembly protein (NAP) family.

The protein localises to the nucleus. It localises to the cytoplasm. May modulate chromatin structure by regulation of nucleosome assembly/disassembly. This Oryza sativa subsp. japonica (Rice) protein is Nucleosome assembly protein 1;1 (NAP1;1).